The primary structure comprises 359 residues: 24-methylenesterol C-methyltransferase 3 (359 aa).

Residues 4–24 form a helical membrane-spanning segment; that stretch reads VALYCTAGLIAGAVYWFICVL.

This sequence belongs to the class I-like SAM-binding methyltransferase superfamily. Erg6/SMT family.

The protein resides in the membrane. It catalyses the reaction 24-methylidenelophenol + S-adenosyl-L-methionine = (Z)-24-ethylidenelophenol + S-adenosyl-L-homocysteine + H(+). It participates in steroid biosynthesis; sterol biosynthesis. Its function is as follows. Catalyzes the methyl transfer from S-adenosyl-methionine to the methylene group of 24-methylene lophenol to form 24-ethylidene lophenol. The chain is 24-methylenesterol C-methyltransferase 3 (SMT3) from Arabidopsis thaliana (Mouse-ear cress).